The primary structure comprises 337 residues: Glycerol-3-phosphate dehydrogenase [NAD(P)+] (337 aa).

NADPH is bound by residues Ser12, Trp13, and Lys110. Lys110, Gly141, and Ser143 together coordinate sn-glycerol 3-phosphate. Position 145 (Ala145) interacts with NADPH. Positions 196, 249, 259, 260, and 261 each coordinate sn-glycerol 3-phosphate. The Proton acceptor role is filled by Lys196. Arg260 is an NADPH binding site. The NADPH site is built by Val284 and Glu286.

The protein belongs to the NAD-dependent glycerol-3-phosphate dehydrogenase family.

It is found in the cytoplasm. It carries out the reaction sn-glycerol 3-phosphate + NAD(+) = dihydroxyacetone phosphate + NADH + H(+). The enzyme catalyses sn-glycerol 3-phosphate + NADP(+) = dihydroxyacetone phosphate + NADPH + H(+). The protein operates within membrane lipid metabolism; glycerophospholipid metabolism. Catalyzes the reduction of the glycolytic intermediate dihydroxyacetone phosphate (DHAP) to sn-glycerol 3-phosphate (G3P), the key precursor for phospholipid synthesis. The polypeptide is Glycerol-3-phosphate dehydrogenase [NAD(P)+] (Levilactobacillus brevis (strain ATCC 367 / BCRC 12310 / CIP 105137 / JCM 1170 / LMG 11437 / NCIMB 947 / NCTC 947) (Lactobacillus brevis)).